The primary structure comprises 916 residues: Translation initiation factor IF-2 (916 aa).

The disordered stretch occupies residues methionine 1–glutamine 325. Residues isoleucine 60–arginine 91 show a composition bias toward low complexity. The segment covering glycine 97–glutamine 108 has biased composition (polar residues). The segment covering serine 125–arginine 182 has biased composition (basic and acidic residues). 2 stretches are compositionally biased toward low complexity: residues glutamine 183–arginine 209 and aspartate 229–valine 243. The region spanning serine 414–aspartate 581 is the tr-type G domain. The tract at residues glycine 423–threonine 430 is G1. Glycine 423 to threonine 430 serves as a coordination point for GTP. Residues glycine 448–histidine 452 are G2. A G3 region spans residues aspartate 469 to glycine 472. GTP contacts are provided by residues aspartate 469–histidine 473 and asparagine 523–aspartate 526. The tract at residues asparagine 523–aspartate 526 is G4. The segment at serine 559–lysine 561 is G5.

This sequence belongs to the TRAFAC class translation factor GTPase superfamily. Classic translation factor GTPase family. IF-2 subfamily.

The protein localises to the cytoplasm. In terms of biological role, one of the essential components for the initiation of protein synthesis. Protects formylmethionyl-tRNA from spontaneous hydrolysis and promotes its binding to the 30S ribosomal subunits. Also involved in the hydrolysis of GTP during the formation of the 70S ribosomal complex. The polypeptide is Translation initiation factor IF-2 (Rhizobium etli (strain ATCC 51251 / DSM 11541 / JCM 21823 / NBRC 15573 / CFN 42)).